We begin with the raw amino-acid sequence, 1598 residues long: Structural maintenance of chromosomes flexible hinge domain-containing protein GMI1 (1598 aa).

Positions 1191–1218 (VTSAPTSEREESGYSTPHSKTTPPPESG) are disordered. 2 coiled-coil regions span residues 1258–1301 (TEDL…ASLE) and 1565–1595 (EEMM…FTAM).

In terms of tissue distribution, highly expressed in closed buds and open flowers. Expressed at low levels in roots, stems, cauline leaves and siliques. Expressed in the region of the shoot and floral meristems.

The protein resides in the nucleus. Its function is as follows. Contributes to DNA double-strand break (DSB) repair via somatic homologous recombination. Functions downstream of ATM. In Arabidopsis thaliana (Mouse-ear cress), this protein is Structural maintenance of chromosomes flexible hinge domain-containing protein GMI1.